The sequence spans 253 residues: Probable transcriptional regulatory protein RBE_0568 (253 aa).

Residues 1 to 21 form a disordered region; it reads MAGHSKFKNIQHRKGAQDKKR.

Belongs to the TACO1 family.

The protein resides in the cytoplasm. This chain is Probable transcriptional regulatory protein RBE_0568, found in Rickettsia bellii (strain RML369-C).